Here is a 140-residue protein sequence, read N- to C-terminus: Nucleoside diphosphate kinase (140 aa).

6 residues coordinate ATP: Lys11, Phe59, Arg87, Thr93, Arg104, and Asn114. Residue His117 is the Pros-phosphohistidine intermediate of the active site.

The protein belongs to the NDK family. In terms of assembly, homotetramer. Requires Mg(2+) as cofactor.

It localises to the cytoplasm. The enzyme catalyses a 2'-deoxyribonucleoside 5'-diphosphate + ATP = a 2'-deoxyribonucleoside 5'-triphosphate + ADP. The catalysed reaction is a ribonucleoside 5'-diphosphate + ATP = a ribonucleoside 5'-triphosphate + ADP. Major role in the synthesis of nucleoside triphosphates other than ATP. The ATP gamma phosphate is transferred to the NDP beta phosphate via a ping-pong mechanism, using a phosphorylated active-site intermediate. This is Nucleoside diphosphate kinase from Bradyrhizobium sp. (strain ORS 278).